The sequence spans 52 residues: Large ribosomal subunit protein bL32c (52 aa).

Belongs to the bacterial ribosomal protein bL32 family.

Its subcellular location is the plastid. The protein resides in the chloroplast. The polypeptide is Large ribosomal subunit protein bL32c (Eucalyptus globulus subsp. globulus (Tasmanian blue gum)).